A 705-amino-acid chain; its full sequence is Polyribonucleotide nucleotidyltransferase (705 aa).

D485 and D491 together coordinate Mg(2+). Positions 552–611 (PRVYTMTIAPEKIRDVIGAGGKTINKIIGETGVQIDIKEDGKIYVMSSDSVGANRALKMI) constitute a KH domain. An S1 motif domain is found at 621–689 (GEIYLGKVTR…DQGRINLSRR (69 aa)).

It belongs to the polyribonucleotide nucleotidyltransferase family. It depends on Mg(2+) as a cofactor.

It is found in the cytoplasm. It carries out the reaction RNA(n+1) + phosphate = RNA(n) + a ribonucleoside 5'-diphosphate. Involved in mRNA degradation. Catalyzes the phosphorolysis of single-stranded polyribonucleotides processively in the 3'- to 5'-direction. This chain is Polyribonucleotide nucleotidyltransferase, found in Clostridium tetani (strain Massachusetts / E88).